The following is a 210-amino-acid chain: Putative polysaccharide-binding protein (210 aa).

The first 22 residues, 1–22, serve as a signal peptide directing secretion; it reads MGFLKGTAAALTLLSAAAAASA. 4 consecutive CBM1 domains span residues 23-62, 63-105, 125-165, and 166-210; these read CGVLYEQCGGIGFDGVTCCSEGLMCMKMGPYYSQCRAMPG, MMGQ…LANK, CGKE…APPP, and KMGE…PMHP.

This is Putative polysaccharide-binding protein from Porphyra purpurea (Red seaweed).